A 560-amino-acid polypeptide reads, in one-letter code: DNA ligase B (560 aa).

The active-site N6-AMP-lysine intermediate is lysine 124.

The protein belongs to the NAD-dependent DNA ligase family. LigB subfamily.

It catalyses the reaction NAD(+) + (deoxyribonucleotide)n-3'-hydroxyl + 5'-phospho-(deoxyribonucleotide)m = (deoxyribonucleotide)n+m + AMP + beta-nicotinamide D-nucleotide.. Functionally, catalyzes the formation of phosphodiester linkages between 5'-phosphoryl and 3'-hydroxyl groups in double-stranded DNA using NAD as a coenzyme and as the energy source for the reaction. This is DNA ligase B from Escherichia coli (strain K12 / DH10B).